Reading from the N-terminus, the 254-residue chain is Pyridoxine 5'-phosphate synthase (254 aa).

Asparagine 8 lines the 3-amino-2-oxopropyl phosphate pocket. 10 to 11 (DH) is a binding site for 1-deoxy-D-xylulose 5-phosphate. Arginine 19 lines the 3-amino-2-oxopropyl phosphate pocket. Histidine 44 serves as the catalytic Proton acceptor. 1-deoxy-D-xylulose 5-phosphate is bound by residues arginine 46 and histidine 51. Catalysis depends on glutamate 74, which acts as the Proton acceptor. Residue threonine 104 participates in 1-deoxy-D-xylulose 5-phosphate binding. The active-site Proton donor is histidine 198. Residues glycine 199 and 220–221 (GH) each bind 3-amino-2-oxopropyl phosphate.

Belongs to the PNP synthase family. As to quaternary structure, homooctamer; tetramer of dimers.

The protein resides in the cytoplasm. It carries out the reaction 3-amino-2-oxopropyl phosphate + 1-deoxy-D-xylulose 5-phosphate = pyridoxine 5'-phosphate + phosphate + 2 H2O + H(+). It participates in cofactor biosynthesis; pyridoxine 5'-phosphate biosynthesis; pyridoxine 5'-phosphate from D-erythrose 4-phosphate: step 5/5. Functionally, catalyzes the complicated ring closure reaction between the two acyclic compounds 1-deoxy-D-xylulose-5-phosphate (DXP) and 3-amino-2-oxopropyl phosphate (1-amino-acetone-3-phosphate or AAP) to form pyridoxine 5'-phosphate (PNP) and inorganic phosphate. The polypeptide is Pyridoxine 5'-phosphate synthase (Caulobacter vibrioides (strain ATCC 19089 / CIP 103742 / CB 15) (Caulobacter crescentus)).